The primary structure comprises 239 residues: Small ribosomal subunit protein uS3c (239 aa).

A KH type-2 domain is found at Ile43–Lys139. Positions Asn50 to Met74 are disordered.

It belongs to the universal ribosomal protein uS3 family. Part of the 30S ribosomal subunit.

It is found in the plastid. The protein resides in the chloroplast. The sequence is that of Small ribosomal subunit protein uS3c (rps3) from Triticum aestivum (Wheat).